The sequence spans 329 residues: MKVLWAALVVALLAGCWADVEPESPLEENLEPELEPKRELEQEVEPEAGWQAGQPWELALARFWDYLRWVQTLSDQVQEEVLSNQVTQELTTLMEETMKEIKAYRAELEEQLGPMASETQARVAKELQAAQARLRSDMEDVRTRLSQYRGEVQAMLGQSTEELRARFASHMRKLRKRVLRDAEDLQKRLAVYRAGVREGAERSVSTIRERLWPLLEQARTRHAKVDALATQPLRERVNALGQQLRGRLEEMGSRARSHLDEVREQMEEVQAKMEEQANQMRQQAEPFQARLKGWFEPLVEDMQRQWAVLVEKVQAAVGTSPTTPPVETK.

Residues methionine 1–alanine 18 form the signal peptide. 8 repeat units span residues threonine 92 to glycine 113, proline 114 to arginine 135, serine 136 to glycine 157, glutamine 158 to leucine 179, arginine 180 to glutamate 201, arginine 202 to alanine 223, lysine 224 to arginine 245, and glycine 246 to glutamate 267. An 8 X 22 AA approximate tandem repeats region spans residues threonine 92–glutamate 267. Methionine 155 is modified (methionine sulfoxide). Residue serine 159 is modified to Phosphoserine. The tract at residues histidine 170–arginine 180 is LDL and other lipoprotein receptors binding. Leucine 174–arginine 177 provides a ligand contact to heparin. The lipid-binding and lipoprotein association stretch occupies residues histidine 222 to methionine 302. Glycine 241–leucine 248 is a binding site for heparin. A homooligomerization region spans residues asparagine 278–lysine 329. Positions arginine 290–methionine 302 are specificity for association with VLDL.

It belongs to the apolipoprotein A1/A4/E family. Homotetramer. May interact with ABCA1; functionally associated with ABCA1 in the biogenesis of HDLs. May interact with APP/A4 amyloid-beta peptide; the interaction is extremely stable in vitro but its physiological significance is unclear. May interact with MAPT. May interact with MAP2. In the cerebrospinal fluid, interacts with secreted SORL1. Interacts with PMEL; this allows the loading of PMEL luminal fragment on ILVs to induce fibril nucleation. In terms of processing, APOE exists as multiple glycosylated and sialylated glycoforms within cells and in plasma. The extent of glycosylation and sialylation are tissue and context specific. Glycated in plasma VLDL. Post-translationally, phosphorylated by FAM20C in the extracellular medium.

The protein localises to the secreted. The protein resides in the extracellular space. It is found in the extracellular matrix. Its subcellular location is the extracellular vesicle. It localises to the endosome. The protein localises to the multivesicular body. In terms of biological role, APOE is an apolipoprotein, a protein associating with lipid particles, that mainly functions in lipoprotein-mediated lipid transport between organs via the plasma and interstitial fluids. APOE is a core component of plasma lipoproteins and is involved in their production, conversion and clearance. Apolipoproteins are amphipathic molecules that interact both with lipids of the lipoprotein particle core and the aqueous environment of the plasma. As such, APOE associates with chylomicrons, chylomicron remnants, very low density lipoproteins (VLDL) and intermediate density lipoproteins (IDL) but shows a preferential binding to high-density lipoproteins (HDL). It also binds a wide range of cellular receptors including the LDL receptor/LDLR, the LDL receptor-related proteins LRP1, LRP2 and LRP8 and the very low-density lipoprotein receptor/VLDLR that mediate the cellular uptake of the APOE-containing lipoprotein particles. Finally, APOE also has a heparin-binding activity and binds heparan-sulfate proteoglycans on the surface of cells, a property that supports the capture and the receptor-mediated uptake of APOE-containing lipoproteins by cells. A main function of APOE is to mediate lipoprotein clearance through the uptake of chylomicrons, VLDLs, and HDLs by hepatocytes. APOE is also involved in the biosynthesis by the liver of VLDLs as well as their uptake by peripheral tissues ensuring the delivery of triglycerides and energy storage in muscle, heart and adipose tissues. By participating in the lipoprotein-mediated distribution of lipids among tissues, APOE plays a critical role in plasma and tissues lipid homeostasis. APOE is also involved in two steps of reverse cholesterol transport, the HDLs-mediated transport of cholesterol from peripheral tissues to the liver, and thereby plays an important role in cholesterol homeostasis. First, it is functionally associated with ABCA1 in the biogenesis of HDLs in tissues. Second, it is enriched in circulating HDLs and mediates their uptake by hepatocytes. APOE also plays an important role in lipid transport in the central nervous system, regulating neuron survival and sprouting. This Arctocephalus gazella (Antarctic fur seal) protein is Apolipoprotein E (APOE).